The sequence spans 365 residues: tRNA/tmRNA (uracil-C(5))-methyltransferase (365 aa).

S-adenosyl-L-methionine contacts are provided by glutamine 189, tyrosine 217, asparagine 222, glutamate 238, and aspartate 298. Cysteine 323 (nucleophile) is an active-site residue. Glutamate 357 (proton acceptor) is an active-site residue.

It belongs to the class I-like SAM-binding methyltransferase superfamily. RNA M5U methyltransferase family. TrmA subfamily.

It carries out the reaction uridine(54) in tRNA + S-adenosyl-L-methionine = 5-methyluridine(54) in tRNA + S-adenosyl-L-homocysteine + H(+). The enzyme catalyses uridine(341) in tmRNA + S-adenosyl-L-methionine = 5-methyluridine(341) in tmRNA + S-adenosyl-L-homocysteine + H(+). Dual-specificity methyltransferase that catalyzes the formation of 5-methyluridine at position 54 (m5U54) in all tRNAs, and that of position 341 (m5U341) in tmRNA (transfer-mRNA). The sequence is that of tRNA/tmRNA (uracil-C(5))-methyltransferase from Shewanella amazonensis (strain ATCC BAA-1098 / SB2B).